Reading from the N-terminus, the 430-residue chain is Cytochrome c biogenesis protein CcsB (430 aa).

Helical transmembrane passes span 14 to 34 (LRIAIGLLLVIALASALGTAI), 72 to 92 (SSWFLALLAWLGLALILCSWR), and 162 to 182 (AGPMLVHLGLVLLMLGAVWGS).

The protein belongs to the Ccs1/CcsB family. As to quaternary structure, may interact with CcsA.

Its subcellular location is the cellular thylakoid membrane. In terms of biological role, required during biogenesis of c-type cytochromes (cytochrome c6 and cytochrome f) at the step of heme attachment. In Prochlorococcus marinus (strain MIT 9313), this protein is Cytochrome c biogenesis protein CcsB.